The sequence spans 286 residues: Putative sensory transducer protein YfmS (286 aa).

The region spanning 68–286 is the Methyl-accepting transducer domain; sequence ITDAIRSNQK…KMAEKALEEE (219 aa).

The protein belongs to the methyl-accepting chemotaxis (MCP) protein family.

Functionally, chemotactic-signal transducers respond to changes in the concentration of attractants and repellents in the environment, transduce a signal from the outside to the inside of the cell, and facilitate sensory adaptation through the variation of the level of methylation. Attractants increase the level of methylation while repellents decrease the level of methylation. The protein is Putative sensory transducer protein YfmS (yfmS) of Bacillus subtilis (strain 168).